We begin with the raw amino-acid sequence, 330 residues long: Calponin-3 (330 aa).

N6-acetyllysine is present on lysine 23. One can recognise a Calponin-homology (CH) domain in the interval 26 to 130 (QQAEEDLRNW…TLVALAGLAK (105 aa)). Lysine 158 carries the post-translational modification N6-methyllysine. 3 Calponin-like repeats span residues 164–189 (IGLQ…RHLY), 204–229 (ISLQ…RDIY), and 243–268 (ISLQ…RQVY). Residues 279–330 (PVIHNGSQGTGTNGSEISDSDYQAEYPDEYHGEYPDDYPREYQYGDDQGIDY) form a disordered region. Residues 306-318 (DEYHGEYPDDYPR) are compositionally biased toward basic and acidic residues.

It belongs to the calponin family.

Functionally, thin filament-associated protein that is implicated in the regulation and modulation of smooth muscle contraction. It is capable of binding to actin, calmodulin and tropomyosin. The interaction of calponin with actin inhibits the actomyosin Mg-ATPase activity. This is Calponin-3 (Cnn3) from Mus musculus (Mouse).